The sequence spans 377 residues: Transmembrane protein 237A (377 aa).

Basic and acidic residues-rich tracts occupy residues Met-1–Pro-11, Leu-43–Pro-64, and His-74–Asn-87. The disordered stretch occupies residues Met-1–Glu-124. The next 4 helical transmembrane spans lie at Ile-198–Val-218, Leu-239–Phe-259, Gly-273–Leu-293, and Pro-326–Ala-346.

This sequence belongs to the TMEM237 family.

It is found in the membrane. Its subcellular location is the cell projection. The protein resides in the cilium. Its function is as follows. Component of the transition zone in primary cilia. Required for ciliogenesis. The chain is Transmembrane protein 237A (tmem237a) from Danio rerio (Zebrafish).